The primary structure comprises 331 residues: MRFNGLDLNLLVALDALMTERSLTAAARKINLSQPAMSAAVARLRSYFRDELFAMRGRKLVPTSRAEGLAAPVREALMHIELSIIARDAFDPAQSNRRFRIGLCDFITIVFFRHVAERVAREAPAVSFELVALADEHDELLRRGELDFIILPEPFMSSAHPRIALFEERLVCVGCGTNGELRRRLTFDRYMTMGHVAVKLGVARMPPIEESFLLDRGLNRRIDILVHSYGMIPPMLMGTSRIGTMPLRLVKHFETTMPLRIAELPRPFPTFTEAVQWPVLQNSDPESIWMREILLQEAARMTSTSDDCSMSYASEQADTEGRLTSVASRLS.

The 58-residue stretch at 6–63 folds into the HTH lysR-type domain; that stretch reads LDLNLLVALDALMTERSLTAAARKINLSQPAMSAAVARLRSYFRDELFAMRGRKLVPT. Residues 23-42 constitute a DNA-binding region (H-T-H motif); that stretch reads LTAAARKINLSQPAMSAAVA.

The protein belongs to the LysR transcriptional regulatory family.

Its function is as follows. NodD regulates the expression of the nodABCFE genes which encode other nodulation proteins. NodD is also a negative regulator of its own expression. Binds flavonoids as inducers. In Bradyrhizobium elkanii, this protein is Nodulation protein D 2 (nodD2).